A 178-amino-acid chain; its full sequence is Ribosome maturation factor RimP (178 aa).

It belongs to the RimP family.

The protein resides in the cytoplasm. Functionally, required for maturation of 30S ribosomal subunits. The protein is Ribosome maturation factor RimP of Streptococcus pyogenes serotype M5 (strain Manfredo).